Consider the following 101-residue polypeptide: NAD(P)H-quinone oxidoreductase subunit 4L, chloroplastic (101 aa).

3 helical membrane-spanning segments follow: residues 2–22 (MLEHILVLSAYLFSIGIYGLI), 32–52 (MCLELILNAVNINFVTFSDFF), and 61–81 (IFSIFVIAIAAAEAAIGSAIV).

Belongs to the complex I subunit 4L family. In terms of assembly, NDH is composed of at least 16 different subunits, 5 of which are encoded in the nucleus.

It is found in the plastid. The protein localises to the chloroplast thylakoid membrane. The enzyme catalyses a plastoquinone + NADH + (n+1) H(+)(in) = a plastoquinol + NAD(+) + n H(+)(out). It catalyses the reaction a plastoquinone + NADPH + (n+1) H(+)(in) = a plastoquinol + NADP(+) + n H(+)(out). Its function is as follows. NDH shuttles electrons from NAD(P)H:plastoquinone, via FMN and iron-sulfur (Fe-S) centers, to quinones in the photosynthetic chain and possibly in a chloroplast respiratory chain. The immediate electron acceptor for the enzyme in this species is believed to be plastoquinone. Couples the redox reaction to proton translocation, and thus conserves the redox energy in a proton gradient. The polypeptide is NAD(P)H-quinone oxidoreductase subunit 4L, chloroplastic (Gossypium hirsutum (Upland cotton)).